The chain runs to 107 residues: Small ribosomal subunit protein uS17 (107 aa).

The protein belongs to the universal ribosomal protein uS17 family. Part of the 30S ribosomal subunit.

One of the primary rRNA binding proteins, it binds specifically to the 5'-end of 16S ribosomal RNA. This chain is Small ribosomal subunit protein uS17, found in Thermotoga sp. (strain RQ2).